Consider the following 237-residue polypeptide: Uridylate kinase (237 aa).

Position 12–15 (12–15 (KLSG)) interacts with ATP. The tract at residues 20–25 (GDEGFG) is involved in allosteric activation by GTP. G54 provides a ligand contact to UMP. The ATP site is built by G55 and R59. Residues D74 and 135-142 (TGSPFFTT) each bind UMP. T162, Y168, and D171 together coordinate ATP.

Belongs to the UMP kinase family. Homohexamer.

The protein resides in the cytoplasm. The enzyme catalyses UMP + ATP = UDP + ADP. Its pathway is pyrimidine metabolism; CTP biosynthesis via de novo pathway; UDP from UMP (UMPK route): step 1/1. With respect to regulation, allosterically activated by GTP. Inhibited by UTP. Its function is as follows. Catalyzes the reversible phosphorylation of UMP to UDP. The chain is Uridylate kinase from Haemophilus ducreyi (strain 35000HP / ATCC 700724).